The sequence spans 149 residues: MDLILLQKVTNLGNLGDKVSVKPGYGRNFLVPQGKAVPATAANVEAFETKRAEYEAKANTILADAQSRATKFEGASVTIGAHASTEGKLYGSVGPRDIAEAFTAAGLPLEKSEVILGEGAFRNVGEYDVVLHLHADVETTVKVIVESDA.

This sequence belongs to the bacterial ribosomal protein bL9 family.

Binds to the 23S rRNA. This is Large ribosomal subunit protein bL9 from Xanthomonas campestris pv. campestris (strain 8004).